The following is a 185-amino-acid chain: Ribosome-recycling factor (185 aa).

This sequence belongs to the RRF family.

It localises to the cytoplasm. Its function is as follows. Responsible for the release of ribosomes from messenger RNA at the termination of protein biosynthesis. May increase the efficiency of translation by recycling ribosomes from one round of translation to another. This Marinomonas sp. (strain MWYL1) protein is Ribosome-recycling factor.